Here is a 388-residue protein sequence, read N- to C-terminus: Leucine aminopeptidase 1 (388 aa).

The signal sequence occupies residues 1–19 (MKSLSLLALAAIAPPAAVA). The propeptide occupies 20–88 (AVVDRQVPFE…SAKSHERIQV (69 aa)). Asn180 carries an N-linked (GlcNAc...) asparagine glycan. 4 residues coordinate Zn(2+): His188, Asp207, Glu246, and Asp273. A disulfide bridge links Cys322 with Cys326. Residue His355 coordinates Zn(2+).

The protein belongs to the peptidase M28 family. M28E subfamily. Monomer. Zn(2+) serves as cofactor.

The protein resides in the secreted. In terms of biological role, extracellular aminopeptidase that allows assimilation of proteinaceous substrates. The polypeptide is Leucine aminopeptidase 1 (LAP1) (Coccidioides posadasii (strain C735) (Valley fever fungus)).